A 461-amino-acid chain; its full sequence is DNA polymerase delta subunit 3 (461 aa).

Disordered stretches follow at residues 148-229 (VAQA…SAKG), 249-380 (VPGQ…KRVL), and 399-461 (YESE…CQKK). Over residues 155–172 (ARSSSQTPSDTSAVSTPP) the composition is skewed to polar residues. Over residues 205–214 (DANKEPKAKE) the composition is skewed to basic and acidic residues. Low complexity predominate over residues 215–228 (APSVSAASSKPSAK). Basic and acidic residues predominate over residues 279–304 (KPGRKTEPAKIQQKDKKSKMKRMDKS). Residues 371 to 380 (GKKRKRKRVL) show a composition bias toward basic residues. The span at 427-436 (VKKEPKEERK) shows a compositional bias: basic and acidic residues. A PIP-box motif is present at residues 451-458 (QISIMGFC).

As to quaternary structure, component of both the DNA polymerase delta and DNA polymerase zeta complexes. The tetrameric DNA polymerase delta complex (Pol-delta4), which consists of POLD1/p125, POLD2/p50, POLD3/p66/p68 and POLD4/p12, with POLD1 bearing DNA polymerase and 3' to 5' proofreading exonuclease activities.

The protein resides in the cytoplasm. Its subcellular location is the nucleus. Accessory component of both the DNA polymerase delta complex and the DNA polymerase zeta complex. As a component of the trimeric and tetrameric DNA polymerase delta complexes (Pol-delta3 and Pol-delta4, respectively), plays a role in high fidelity genome replication, including in lagging strand synthesis, and repair. Required for optimal Pol-delta activity. Stabilizes the Pol-delta complex and plays a major role in Pol-delta stimulation by PCNA. Pol-delta3 and Pol-delta4 are characterized by the absence or the presence of POLD4. They exhibit differences in catalytic activity. Most notably, Pol-delta3 shows higher proofreading activity than Pol-delta4. Although both Pol-delta3 and Pol-delta4 process Okazaki fragments in vitro, Pol-delta3 may also be better suited to fulfill this task, exhibiting near-absence of strand displacement activity compared to Pol-delta4 and stalling on encounter with the 5'-blocking oligonucleotides. Pol-delta3 idling process may avoid the formation of a gap, while maintaining a nick that can be readily ligated. Along with DNA polymerase kappa, DNA polymerase delta carries out approximately half of nucleotide excision repair (NER) synthesis following UV irradiation. In this context, POLD3, along with PCNA and RFC1-replication factor C complex, is required to recruit POLD1, the catalytic subunit of the polymerase delta complex, to DNA damage sites. Under conditions of DNA replication stress, required for the repair of broken replication forks through break-induced replication (BIR). Involved in the translesion synthesis (TLS) of templates carrying O6-methylguanine or abasic sites performed by Pol-delta4, independently of DNA polymerase zeta (REV3L) or eta (POLH). Facilitates abasic site bypass by DNA polymerase delta by promoting extension from the nucleotide inserted opposite the lesion. Also involved in TLS, as a component of the tetrameric DNA polymerase zeta complex. Along with POLD2, dramatically increases the efficiency and processivity of DNA synthesis of the DNA polymerase zeta complex compared to the minimal zeta complex, consisting of only REV3L and REV7. The chain is DNA polymerase delta subunit 3 (POLD3) from Gallus gallus (Chicken).